We begin with the raw amino-acid sequence, 224 residues long: MITRPIILVILCYAILMIVQSFVPKAVALKRKPDVGGFMVEDQRTHKSHNYMMKRARNDVLGDKENVRPNPYYTEPFDPDTSPEELSALIVDYANMIRNDVILLDNSVETRTRKRGNIQVENQAIPDPPCTCKYKKEIEDLGENSVPRFIETRNCNKTQQPTCRPPYICKESLYSITILKRRETKSQESLEIPNELKYRWVAESHPVSVACLCTRDYQLRYNNN.

Positions 1 to 29 (MITRPIILVILCYAILMIVQSFVPKAVAL) are cleaved as a signal peptide. 3 disulfide bridges follow: Cys-132/Cys-169, Cys-155/Cys-211, and Cys-163/Cys-213. Asn-156 carries an N-linked (GlcNAc...) asparagine glycan.

Homodimer; disulfide-linked. PTTH is synthesized by two dorsolateral neurosecretory cells of the Bombyx brain.

In terms of biological role, PTTH is a brain secretory polypeptide of insects which stimulates the prothoracic glands to produce and release ecdysone, the steroid essential to insect development. Peptides P2K and P6K are presumed to be cleaved post-translationally and may play some unknown physiologically or developmentally important functions. The polypeptide is Prothoracicotropic hormone (Bombyx mori (Silk moth)).